The primary structure comprises 484 residues: MTKVELAKLRTVIPEMRRVRRIHFIGIGGAGMGGIAEVLANEGYQVTGSDLARNAVTERLESLGAHIFVGHSAEHVNEASVVVVSTAIKQDNPELLAARELRIPVVRRAEMLAELMRFRHGIAIAGTHGKTTTTSLVASIYAEADRDPTFVIGGLLNSAGTNARLGSSRYLIAEADESDASFLHLQPMVSIVTNIEADHMDTYGGDFSKLKATFIDFLHNLPFYGLAVVCVDDPVIRGMLPEIARPTITYGLSDDADVQVLDFVQTSNRSRFRVRRKDAGELEVTLNLPGIHNALNAAAAIAVATEDGIGDDAIIRALAKFEGVGRRFQQYGEFETGRGKAMLVDDYGHHPSEVKVTINAARAGWPEKRLVMVFQPHRYTRTRDLYEDFADVLSKVDVLVMLEVYAAGEEPIPGADGRALCRSIRSRGSLEPIFVATPDDVPAVLAGLVGEGDLVLTQGAGNVGALARRLGEMKLSIESMKSGA.

ATP is bound at residue 126–132 (GTHGKTT).

It belongs to the MurCDEF family.

The protein localises to the cytoplasm. The enzyme catalyses UDP-N-acetyl-alpha-D-muramate + L-alanine + ATP = UDP-N-acetyl-alpha-D-muramoyl-L-alanine + ADP + phosphate + H(+). It functions in the pathway cell wall biogenesis; peptidoglycan biosynthesis. Cell wall formation. The protein is UDP-N-acetylmuramate--L-alanine ligase of Aeromonas hydrophila subsp. hydrophila (strain ATCC 7966 / DSM 30187 / BCRC 13018 / CCUG 14551 / JCM 1027 / KCTC 2358 / NCIMB 9240 / NCTC 8049).